A 178-amino-acid polypeptide reads, in one-letter code: Mediator of RNA polymerase II transcription subunit 30 (178 aa).

The interval 1–22 (MSTPPLAPTGMASGPFGGPQAQ) is disordered. The residue at position 2 (serine 2) is an N-acetylserine. Positions 134 to 173 (FASEERREIVEVNKKLKQKNQQLKQIMDQLRNLIWDINAM) form a coiled coil.

This sequence belongs to the Mediator complex subunit 30 family. Component of the Mediator complex, which is composed of MED1, MED4, MED6, MED7, MED8, MED9, MED10, MED11, MED12, MED13, MED13L, MED14, MED15, MED16, MED17, MED18, MED19, MED20, MED21, MED22, MED23, MED24, MED25, MED26, MED27, MED29, MED30, MED31, CCNC, CDK8 and CDC2L6/CDK11. The MED12, MED13, CCNC and CDK8 subunits form a distinct module termed the CDK8 module. Mediator containing the CDK8 module is less active than Mediator lacking this module in supporting transcriptional activation. Individual preparations of the Mediator complex lacking one or more distinct subunits have been variously termed ARC, CRSP, DRIP, PC2, SMCC and TRAP.

Its subcellular location is the nucleus. Its function is as follows. Component of the Mediator complex, a coactivator involved in the regulated transcription of nearly all RNA polymerase II-dependent genes. Mediator functions as a bridge to convey information from gene-specific regulatory proteins to the basal RNA polymerase II transcription machinery. Mediator is recruited to promoters by direct interactions with regulatory proteins and serves as a scaffold for the assembly of a functional preinitiation complex with RNA polymerase II and the general transcription factors. The protein is Mediator of RNA polymerase II transcription subunit 30 (Med30) of Mus musculus (Mouse).